A 342-amino-acid chain; its full sequence is Sideroflexin-5 (342 aa).

Residues 1–24 are compositionally biased toward low complexity; sequence MADTATTASAASAAASASNASSDA. The disordered stretch occupies residues 1-29; it reads MADTATTASAASAAASASNASSDAPPFQL. Helical transmembrane passes span 105–125, 165–185, 256–276, and 289–309; these read IFMP…VVGL, FIQG…GLNV, LTRV…MSML, and LLPV…PLAI.

Belongs to the sideroflexin family. As to expression, specifically expressed in the brain.

The protein resides in the mitochondrion inner membrane. The catalysed reaction is citrate(in) = citrate(out). Functionally, mitochondrial amino-acid transporter. Transports citrate. Does not act as a serine transporter: not able to mediate transport of serine into mitochondria. In brown adipose tissue, plays a role in the regulation of UCP1-dependent thermogenesis probably by supporting mitochondrial glycerol-3-phosphate utilization. This Rattus norvegicus (Rat) protein is Sideroflexin-5.